Reading from the N-terminus, the 469-residue chain is Dihydrolipoyl dehydrogenase (469 aa).

FAD is bound by residues 40–48 (EKASLGGVC), Lys-57, and Ala-120. Cys-48 and Cys-53 are oxidised to a cystine. NAD(+) contacts are provided by residues 186 to 190 (GGGAI), Glu-209, and 275 to 278 (AVGV). FAD contacts are provided by Asp-317 and Ala-325. His-450 (proton acceptor) is an active-site residue.

This sequence belongs to the class-I pyridine nucleotide-disulfide oxidoreductase family. Homodimer. FAD is required as a cofactor.

The protein localises to the cytoplasm. It catalyses the reaction N(6)-[(R)-dihydrolipoyl]-L-lysyl-[protein] + NAD(+) = N(6)-[(R)-lipoyl]-L-lysyl-[protein] + NADH + H(+). Its function is as follows. Lipoamide dehydrogenase is a component of the alpha-ketoacid dehydrogenase complexes. In Chlorobaculum parvum (strain DSM 263 / NCIMB 8327) (Chlorobium vibrioforme subsp. thiosulfatophilum), this protein is Dihydrolipoyl dehydrogenase (lpd).